Consider the following 142-residue polypeptide: Large ribosomal subunit protein bL17 (142 aa).

Belongs to the bacterial ribosomal protein bL17 family. Part of the 50S ribosomal subunit. Contacts protein L32.

The polypeptide is Large ribosomal subunit protein bL17 (Methylocella silvestris (strain DSM 15510 / CIP 108128 / LMG 27833 / NCIMB 13906 / BL2)).